Reading from the N-terminus, the 122-residue chain is Large ribosomal subunit protein uL14 (122 aa).

Belongs to the universal ribosomal protein uL14 family. Part of the 50S ribosomal subunit. Forms a cluster with proteins L3 and L19. In the 70S ribosome, L14 and L19 interact and together make contacts with the 16S rRNA in bridges B5 and B8.

In terms of biological role, binds to 23S rRNA. Forms part of two intersubunit bridges in the 70S ribosome. This Helicobacter pylori (strain J99 / ATCC 700824) (Campylobacter pylori J99) protein is Large ribosomal subunit protein uL14.